A 238-amino-acid polypeptide reads, in one-letter code: Lipoarabinomannan carrier protein LprG (238 aa).

A signal peptide spans 1–26 (MQAPKHHRRLFAVLATLNTATAVIAG). The N-palmitoyl cysteine moiety is linked to residue cysteine 27. Cysteine 27 is lipidated: S-diacylglycerol cysteine.

This sequence belongs to the LppX/LprAFG lipoprotein family. In terms of processing, modified by Lgt on Cys-27 with an S-linked diacylglyceral, signal peptide is removed by LspA, Cys-27 is further modifed with a fatty acid on its amino group by Lnt yielding a triacylated protein. Probably glycosylated, which is required for T-cell activation.

The protein resides in the cell inner membrane. It localises to the secreted. The protein localises to the cell wall. Its function is as follows. Helps membrane protein ML0556 (P55) transport triacylglycerides (TAG) across the inner cell membrane into the periplasm and probably ultimately to the outer membrane. Binds TAG in its hydrophobic cavity and transfers it between lipid bilayers. TAG probably regulates lipid metabolism and growth regulation and plays a structural role in the outer membrane. Binds di- and triacylated phosphatidyl-myo-inositol mannosides (PIMs), and glycolipid lipoglycan modulins lipoarabinomannan (LAM) and lipomannan (LM), facilitating their recognition by TLR2. Required for activity of drug efflux transporter ML0556. Required, probably with ML0556, for normal surface localization of LAM. Functionally, constitutes a host TLR2 agonist (toll-like receptor) able to stimulate proliferation of CD4+ T-cells derived from a human leprosy patient following protein processing/presentation by MHC class II molecules in peripheral blood mononuclear cells. The sequence is that of Lipoarabinomannan carrier protein LprG from Mycobacterium leprae (strain TN).